Reading from the N-terminus, the 258-residue chain is Ribonuclease HII (258 aa).

The tract at residues Met-1–Pro-20 is disordered. Basic residues predominate over residues Pro-10 to Pro-20. One can recognise an RNase H type-2 domain in the interval Trp-48–Ala-236. A divalent metal cation contacts are provided by Asp-54, Glu-55, and Asp-145.

Belongs to the RNase HII family. Mn(2+) serves as cofactor. It depends on Mg(2+) as a cofactor.

It is found in the cytoplasm. It carries out the reaction Endonucleolytic cleavage to 5'-phosphomonoester.. Endonuclease that specifically degrades the RNA of RNA-DNA hybrids. In Nitrobacter winogradskyi (strain ATCC 25391 / DSM 10237 / CIP 104748 / NCIMB 11846 / Nb-255), this protein is Ribonuclease HII.